The following is a 104-amino-acid chain: Replication restart protein PriB (104 aa).

An SSB domain is found at 1 to 101; that stretch reads MTNRLVLSGT…LHAEQIELID (101 aa).

This sequence belongs to the PriB family. As to quaternary structure, homodimer. Interacts with PriA and DnaT. Component of the replication restart primosome. Primosome assembly occurs via a 'hand-off' mechanism. PriA binds to replication forks, subsequently PriB then DnaT bind; DnaT then displaces ssDNA to generate the helicase loading substrate.

Functionally, involved in the restart of stalled replication forks, which reloads the replicative helicase on sites other than the origin of replication; the PriA-PriB pathway is the major replication restart pathway. During primosome assembly it facilitates complex formation between PriA and DnaT on DNA; stabilizes PriA on DNA. Stimulates the DNA unwinding activity of PriA helicase. This Shigella dysenteriae serotype 1 (strain Sd197) protein is Replication restart protein PriB.